A 342-amino-acid polypeptide reads, in one-letter code: NADH-quinone oxidoreductase subunit H 1 (342 aa).

The next 8 helical transmembrane spans lie at 7 to 27 (FLLEKTIIVTAVFTISLVIAM), 78 to 98 (ALFILGPSIAMMTACLTGAVI), 120 to 140 (IGVLYIFAVVSIGVYGVMIGG), 166 to 186 (MGLSIIALVMTTGTLSIGEIV), 193 to 213 (WWNIVYQPLGFFIFMVCSFAE), 245 to 265 (LFAEYINMFISSAVMSAFYFG), 284 to 304 (ILGTLFFFTKIVLFIFLFMWV), and 322 to 342 (KIMIPMAIINIIITGACILLF).

The protein belongs to the complex I subunit 1 family. NDH-1 is composed of 14 different subunits. Subunits NuoA, H, J, K, L, M, N constitute the membrane sector of the complex.

The protein localises to the cell inner membrane. The enzyme catalyses a quinone + NADH + 5 H(+)(in) = a quinol + NAD(+) + 4 H(+)(out). Functionally, NDH-1 shuttles electrons from NADH, via FMN and iron-sulfur (Fe-S) centers, to quinones in the respiratory chain. The immediate electron acceptor for the enzyme in this species is believed to be ubiquinone. Couples the redox reaction to proton translocation (for every two electrons transferred, four hydrogen ions are translocated across the cytoplasmic membrane), and thus conserves the redox energy in a proton gradient. This subunit may bind ubiquinone. The protein is NADH-quinone oxidoreductase subunit H 1 of Cytophaga hutchinsonii (strain ATCC 33406 / DSM 1761 / CIP 103989 / NBRC 15051 / NCIMB 9469 / D465).